A 705-amino-acid chain; its full sequence is Calpain-1 catalytic subunit (705 aa).

In terms of domain architecture, Calpain catalytic spans 48-347 (LFRDPQFPAG…FSRLEICNLT (300 aa)). Catalysis depends on residues C108, H265, and N289. The tract at residues 348–517 (PDALTKDELS…KQSDTAELDE (170 aa)) is domain III. The interval 518 to 533 (EISADLADEEEITEDD) is linker. One can recognise an EF-hand 1 domain in the interval 530–565 (TEDDIEDGFKNMFQQLAGEDMEISVFELKTILNRVI). The tract at residues 534–704 (IEDGFKNMFQ…LAEWLLLTMC (171 aa)) is domain IV. D549, E551, E556, D589, D591, S593, R595, E600, D619, D621, S623, T625, and E630 together coordinate Ca(2+). EF-hand domains follow at residues 606-641 (NKIR…AGFK) and 671-705 (VKLE…TMCG).

Belongs to the peptidase C2 family. As to quaternary structure, heterodimer of large (catalytic) and a small (regulatory) subunit. Ca(2+) is required as a cofactor. In terms of processing, the N-terminus is blocked. Ubiquitously expressed.

The protein localises to the cytoplasm. The protein resides in the cell membrane. It carries out the reaction Broad endopeptidase specificity.. Its activity is regulated as follows. Activated by micromolar concentrations of calcium and inhibited by calpastatin. Calcium-regulated non-lysosomal thiol-protease which catalyze limited proteolysis of substrates involved in cytoskeletal remodeling and signal transduction. This Gallus gallus (Chicken) protein is Calpain-1 catalytic subunit.